We begin with the raw amino-acid sequence, 104 residues long: Proteasome subunit beta type-8 (104 aa).

This sequence belongs to the peptidase T1B family. The 26S proteasome consists of a 20S proteasome core and two 19S regulatory subunits. The 20S proteasome core is composed of 28 subunits that are arranged in four stacked rings, resulting in a barrel-shaped structure. The two end rings are each formed by seven alpha subunits, and the two central rings are each formed by seven beta subunits. The catalytic chamber with the active sites is on the inside of the barrel. Component of the immunoproteasome, where it displaces the equivalent housekeeping subunit PSMB5. Component of the spermatoproteasome, a form of the proteasome specifically found in testis. Directly interacts with POMP.

It is found in the cytoplasm. It localises to the nucleus. The enzyme catalyses Cleavage of peptide bonds with very broad specificity.. Its function is as follows. The proteasome is a multicatalytic proteinase complex which is characterized by its ability to cleave peptides with Arg, Phe, Tyr, Leu, and Glu adjacent to the leaving group at neutral or slightly basic pH. The proteasome has an ATP-dependent proteolytic activity. This subunit is involved in antigen processing to generate class I binding peptides. May participate in the generation of spliced peptides resulting from the ligation of two separate proteasomal cleavage products that are not contiguous in the parental protein. Required for adipocyte differentiation. The protein is Proteasome subunit beta type-8 (PSMB8) of Sus scrofa (Pig).